A 576-amino-acid polypeptide reads, in one-letter code: Putative diflavin flavoprotein A 1 (576 aa).

Positions 48–240 (RNGTTYNSFL…LAIKTVATGH (193 aa)) are zinc metallo-hydrolase. The Fe cation site is built by His97, Glu99, Asp101, His164, Asp183, and His240. The Flavodoxin-like domain maps to 269 to 431 (VALFYAEDYG…DLEKALGRIS (163 aa)). The tract at residues 432–576 (TGLYIITTKK…VHHRKVGNHY (145 aa)) is flavodoxin-reductase-like.

In the N-terminal section; belongs to the zinc metallo-hydrolase group 3 family. It in the C-terminal section; belongs to the flavodoxin reductase family. It depends on Fe cation as a cofactor.

Its function is as follows. Mediates electron transfer from NADH to oxygen, reducing it to water. This modular protein has 3 redox cofactors, in other organisms the same activity requires 2 or 3 proteins. The protein is Putative diflavin flavoprotein A 1 (dfa1) of Nostoc sp. (strain PCC 7120 / SAG 25.82 / UTEX 2576).